Here is an 863-residue protein sequence, read N- to C-terminus: Facilitated trehalose transporter Tret1 (863 aa).

A disordered region spans residues 1–208 (MSGRDNRGAG…RIGFQQQKAT (208 aa)). Residues 1 to 398 (MSGRDNRGAG…VYRPTTNPIY (398 aa)) are Cytoplasmic-facing. Positions 28–46 (KLKEKLTRAGEELGYHRVE) are enriched in basic and acidic residues. A compositionally biased stretch (polar residues) spans 47 to 59 (SNLSASNTGTSLD). Positions 72–85 (AAPQRHPQQQFPHL) are enriched in low complexity. Composition is skewed to polar residues over residues 114–129 (PPQQ…RSSG) and 177–187 (KPQQQGNNKAA). Phosphoserine occurs at positions 254, 255, and 256. A disordered region spans residues 286 to 307 (VLQGSSTDSDEEGDDAEHKRLI). S326 and S328 each carry phosphoserine. The interval 332–354 (FLTSRQNFQQQRSISTDSRKSRR) is disordered. Residues 336–347 (RQNFQQQRSIST) are compositionally biased toward polar residues. The chain crosses the membrane as a helical span at residues 399–419 (IWTQVLAALSVSLGSLVVGFA). At 420-446 (SAYTSPALVSMTNTNLTSFVVTPQAAS) the chain is on the extracellular side. A glycan (N-linked (GlcNAc...) asparagine) is linked at N434. A helical membrane pass occupies residues 447-467 (WVGGIMPLAGLAGGIAGGPFI). At 468–479 (EYLGRRNTILAT) the chain is on the cytoplasmic side. A helical transmembrane segment spans residues 480–500 (AVPFIISWLLIACAVNVVMVL). Topologically, residues 501-503 (CGR) are extracellular. The chain crosses the membrane as a helical span at residues 504–524 (FLAGFCVGIASLSLPVYLGET). At 525–530 (VQPEVR) the chain is on the cytoplasmic side. A helical membrane pass occupies residues 531-551 (GTLGLLPTAFGNIGILLCFVA). The Extracellular segment spans residues 552-558 (GTYMDWS). Residues 559–579 (MLAFLGGTLPVPFLILMFLIP) form a helical membrane-spanning segment. Residues 580 to 642 (ETPRWYVSRG…ELLKRSNLKP (63 aa)) are Cytoplasmic-facing. A helical membrane pass occupies residues 643–663 (LSISLGLMFFQQLSGINAVIF). Over 664–679 (YTVQIFQDAGSTIDGN) the chain is Extracellular. A helical transmembrane segment spans residues 680 to 700 (VCTIIVGVVNFMATFIATVLI). Topologically, residues 701 to 706 (DRAGRK) are cytoplasmic. Residues 707-727 (ILLYVSNVAMILTLFVLGGFF) form a helical membrane-spanning segment. Residues 728–746 (YCKSTGMDTSNVGWLPLSC) are Extracellular-facing. The chain crosses the membrane as a helical span at residues 747–767 (FVVYILGFSLGFGPIPWLMMG). Topologically, residues 768–773 (EILPAK) are cytoplasmic. The helical transmembrane segment at 774 to 794 (IRGSAASVATAFNWSCTFVVT) threads the bilayer. The Extracellular portion of the chain corresponds to 795 to 807 (KSFQDMIDVMGAH). A helical membrane pass occupies residues 808-828 (GAFWMFGAICFVGLFFVIFYV). At 829-863 (PETQGKTLEDIERKMMGRVRRMSSVANIKPLSFNM) the chain is on the cytoplasmic side. 2 positions are modified to phosphoserine: S851 and S852.

It belongs to the major facilitator superfamily. Sugar transporter (TC 2.A.1.1) family. Trehalose transporter subfamily.

It is found in the cell membrane. Functionally, low-capacity facilitative transporter for trehalose. Does not transport maltose, sucrose or lactose. Mediates the bidirectional transfer of trehalose. Responsible for the transport of trehalose synthesized in the fat body and the incorporation of trehalose into other tissues that require a carbon source, thereby regulating trehalose levels in the hemolymph. The protein is Facilitated trehalose transporter Tret1 of Drosophila mojavensis (Fruit fly).